The chain runs to 864 residues: Protein PAT1 homolog 1 (864 aa).

Polar residues predominate over residues 427-439; that stretch reads PPNSRPNGPQFSG. 3 disordered regions span residues 427–460, 518–539, and 551–602; these read PPNS…SGMP, WTAH…SRKD, and EMQK…STHN. Positions 551 to 580 are enriched in basic and acidic residues; the sequence is EMQKERLRDREKERQRERQERIDRGEERKP.

This sequence belongs to the PAT1 family.

It localises to the cytoplasm. It is found in the P-body. Its function is as follows. RNA-binding protein involved in deadenylation-dependent decapping of mRNAs, leading to the degradation of mRNAs. Acts as a scaffold protein that connects deadenylation and decapping machinery. Required for the recruitment of P-body components such as cgh-1 in somatic blastomeres. May play a role in recruiting the decapping enzyme dcap-1 to cytoplasmic puncta in the cell body of the posterior touch receptor neuron, PLM. In Caenorhabditis briggsae, this protein is Protein PAT1 homolog 1 (patr-1).